A 439-amino-acid polypeptide reads, in one-letter code: MHPFASYVLRSYYKATGWNEDNLYANLTRSSNAILDFTVPRGLHLTVSKSPNALFKTTYSMTAMPSLHGSVGYIFTSCDLDVKSSGNVRFKNMIERFKVYDQPRRPEPKEEEWLAGEQVQKRDYLLYGRFYLPTGRLDALYSTRLSPTVQALVAAISDPPSNIPSELRDRNGDPSNIMLNLQHDVGKWCTEYTWSAEDGMWGVRVLHNFGRLGMSDAVEDGGGGKGDRTVKVKRVDEEDAVEGGLKGRVSMGAELYFSAKERSAGVSTGIRFTTLPDATPPSFQVPSSSSSSSNPVSPSTSQPPTTITALFNPMLGHMSGAYTARVSRDLALSSRFDFNVYSYESEWTMGAEWWLRRSLTPRPSEDGEIHPPTPPPFPPPVEDVQGVVKARASTNNDVSLMWEGRLRNMLVSLGVVSDFSSRSKPIKAIGLEVSYFSSE.

The segment at 275–305 (LPDATPPSFQVPSSSSSSSNPVSPSTSQPPT) is disordered. The segment covering 280-305 (PPSFQVPSSSSSSSNPVSPSTSQPPT) has biased composition (low complexity).

It belongs to the MDM10 family. In terms of assembly, component of the ER-mitochondria encounter structure (ERMES) or MDM complex, composed of MMM1, MDM10, MDM12 and MDM34. Associates with the mitochondrial outer membrane sorting assembly machinery SAM(core) complex.

The protein resides in the mitochondrion outer membrane. In terms of biological role, component of the ERMES/MDM complex, which serves as a molecular tether to connect the endoplasmic reticulum and mitochondria. Components of this complex are involved in the control of mitochondrial shape and protein biogenesis and may function in phospholipid exchange. MDM10 is involved in the late assembly steps of the general translocase of the mitochondrial outer membrane (TOM complex). Functions in the TOM40-specific route of the assembly of outer membrane beta-barrel proteins, including the association of TOM40 with the receptor TOM22 and small TOM proteins. Can associate with the SAM(core) complex as well as the MDM12-MMM1 complex, both involved in late steps of the major beta-barrel assembly pathway, that is responsible for biogenesis of all outer membrane beta-barrel proteins. May act as a switch that shuttles between both complexes and channels precursor proteins into the TOM40-specific pathway. Plays a role in mitochondrial morphology and in the inheritance of mitochondria. This is Mitochondrial distribution and morphology protein 10 from Laccaria bicolor (strain S238N-H82 / ATCC MYA-4686) (Bicoloured deceiver).